The following is a 288-amino-acid chain: Ankyrin repeat and SOCS box protein 8 (288 aa).

Position 17 is a phosphoserine (Ser-17). 4 ANK repeats span residues Gly-52–Ala-81, Tyr-85–Ala-113, Asn-117–Ala-146, and Asn-150–Val-179. Residues Gln-235 to Glu-288 enclose the SOCS box domain.

This sequence belongs to the ankyrin SOCS box (ASB) family. Interacts with TBK1; this interaction promotes TBK1 proteasomal degradation. In terms of processing, phosphorylated by TBK1. As to expression, highest level of expression in skeletal muscle. Also expressed in heart, brain, placenta, liver, kidney and pancreas.

Its subcellular location is the cytoplasm. It functions in the pathway protein modification; protein ubiquitination. In terms of biological role, may be a substrate-recognition component of a SCF-like ECS (Elongin-Cullin-SOCS-box protein) E3 ubiquitin-protein ligase complex which mediates the ubiquitination and subsequent proteasomal degradation of target proteins. Inhibits IFN-beta production through the IRF3 signaling pathway by targeting TBK1 via 'Lys-48'-linked ubiquitination, leading to its proteasomal degradation. This is Ankyrin repeat and SOCS box protein 8 (ASB8) from Homo sapiens (Human).